Consider the following 874-residue polypeptide: MPLQSPLTFSDEQINIGELKQELEKFSSTQKQEFLNHHPVTSLVLARAEYMDLLLTRLWQYFGFNDIYNISLVAVGGYGRGELHPLSDIDILVLSNNKLPTALEAKISEFITLLWDLKLEVGHAVRTVNECAQIGRDDLTVATNLQEARLLCGSEDTFQALKKVVLSDSFWPSETFYRAKIQEQRERHARYHDTTYNLEPDIKSTPGGLRDIHTLSWVARRHFGATSLLEMSRYGFLTDAEYRELVECQDFLWRVRFALHIELRRYDNRLTFAHQAQVAENLGYVGEGNRGVEMMMKEFYRTLRRVAELNKMLLKLFDQAIINGGATENAEILDADFQRRGSLIEARKPALFQARPETILDMFLHIANDSTIEGVSPPTLRQLRTARRRLNKFLHTIPAAREKFLALCRHPNALHKAFSLMHRLGVMAAYLPQWSQIVGQMQFDLFHAYTVDEHSIRLLKHINTFNNPDNHAKHPICCDIYPRMQKKELLIIAAIFHDIGKGRGGDHSVIGEGEAYDFCIEHGLSKPEAKLVGWLVRHHLLMSVTAQRRDIYDPDVITEFAKQVRDEESLEYLVCLTVADICATNPELWNAWKRTLLAELFYSTQRALRRGLENPVDVRERIRHNQQMASALLRKEGFSARQIEVLWQRFKADYFLRHTHTQIAWHCAHLLRMDDPNKPLVLISKKATRGGTEVFVYTKDQPALFATVVAELDRRNFNVHDAQIMTSKDGHVIDTFMVLDQHGEAIDESRHAAVIKHLTHVLEAGRPTKIKTRRTPNKLQHFNVKTKVDFLPTKGKKHTLMEFVALDTPGLLAKVGRTFADLNINLHGAKITTIGERAEDLFILTSEAGGRLSEEQQNELRDKLIEKLSDAVTA.

The segment at 1–332 is uridylyltransferase; that stretch reads MPLQSPLTFS…NGGATENAEI (332 aa). A uridylyl-removing region spans residues 333 to 692; the sequence is LDADFQRRGS…ISKKATRGGT (360 aa). One can recognise an HD domain in the interval 451–573; sequence VDEHSIRLLK…VRDEESLEYL (123 aa). ACT domains lie at 693–777 and 800–874; these read EVFV…RTPN and LMEF…AVTA.

The protein belongs to the GlnD family. Mg(2+) is required as a cofactor.

It catalyses the reaction [protein-PII]-L-tyrosine + UTP = [protein-PII]-uridylyl-L-tyrosine + diphosphate. It carries out the reaction [protein-PII]-uridylyl-L-tyrosine + H2O = [protein-PII]-L-tyrosine + UMP + H(+). Uridylyltransferase (UTase) activity is inhibited by glutamine, while glutamine activates uridylyl-removing (UR) activity. Functionally, modifies, by uridylylation and deuridylylation, the PII regulatory proteins (GlnB and homologs), in response to the nitrogen status of the cell that GlnD senses through the glutamine level. Under low glutamine levels, catalyzes the conversion of the PII proteins and UTP to PII-UMP and PPi, while under higher glutamine levels, GlnD hydrolyzes PII-UMP to PII and UMP (deuridylylation). Thus, controls uridylylation state and activity of the PII proteins, and plays an important role in the regulation of nitrogen assimilation and metabolism. This Vibrio parahaemolyticus serotype O3:K6 (strain RIMD 2210633) protein is Bifunctional uridylyltransferase/uridylyl-removing enzyme.